Here is a 138-residue protein sequence, read N- to C-terminus: 18 kDa antigen 2 (138 aa).

In terms of domain architecture, sHSP spans 21-131 (GTRRPAVMPM…KPRRIEINHN (111 aa)).

It belongs to the small heat shock protein (HSP20) family.

Its function is as follows. Not known. This protein is one of the major immune reactive proteins in mycobacteria. This Mycobacterium avium protein is 18 kDa antigen 2.